A 44-amino-acid polypeptide reads, in one-letter code: MEKIANAVKSAIEAGQNQDWTKLGTSILDIVSNGVTELSKIFGF.

Belongs to the staphylococcal hemolytic protein family.

It localises to the secreted. Functionally, has hemolytic activity and also inhibits the growth of gonococci. The sequence is that of Antibacterial protein 2 homolog from Staphylococcus haemolyticus (strain JCSC1435).